The sequence spans 644 residues: Chaperone protein DnaK (644 aa).

The residue at position 199 (Thr-199) is a Phosphothreonine; by autocatalysis. The segment covering 550–584 (ADKLDESEKQRAQDEIKRGREAMESGDLERMKASR) has biased composition (basic and acidic residues). 2 disordered regions span residues 550 to 586 (ADKL…SRDS) and 599 to 644 (YSQA…EDKK). Residues 600 to 623 (SQAGPEQGAPGAEAGAGASQGASG) are compositionally biased toward low complexity.

Belongs to the heat shock protein 70 family.

Acts as a chaperone. This is Chaperone protein DnaK from Leptospira biflexa serovar Patoc (strain Patoc 1 / Ames).